The chain runs to 447 residues: Putative branched-chain amino acid carrier protein SAB1263c (447 aa).

12 helical membrane-spanning segments follow: residues 6–26 (WVIGFTLFAMFFGAGNLIFPP), 40–60 (ILAFVLTGIDLPLLGVIVGAL), 74–94 (PKFSILFLIIIYLTIGPLFAI), 114–134 (SSIALFIFTIIYFIVVLYICL), 143–163 (IGSLLTPLLLITILAMIIKGY), 193–213 (GYLTMDAIAAIAFSMIVVNAV), 229–249 (LTAGLIAAVALIFIYISLGYI), 290–310 (LLGIIVALACLTTACGLIGAV), 326–346 (FVLVFILMSFIIANQGLNAVI), 350–370 (IPVLSIVYPVAITVVLLILIA), 382–402 (IPVIIVFILSIFSVISKLGWL), and 417–437 (LEWFPVAIIATILGYLVGIFV).

It belongs to the branched chain amino acid transporter family.

It is found in the cell membrane. Functionally, component of the transport system for branched-chain amino acids (leucine, isoleucine and valine), which is coupled to a proton motive force (Potential). Contributes to NaCl tolerance. In Staphylococcus aureus (strain bovine RF122 / ET3-1), this protein is Putative branched-chain amino acid carrier protein SAB1263c.